The sequence spans 705 residues: Tetratricopeptide repeat protein 12 (705 aa).

Position 71 is a phosphothreonine (T71). 3 TPR repeats span residues 106–139 (ADALKEKGNEAFAEGNYETAILRYSEGLEKLKDM), 140–173 (KVLYTNRAQAYMKLEDYEKALVDCEWALKCDEKC), and 174–207 (TKAYFHMGKANLALKNYSVSRECYKKILEINPKL).

In terms of tissue distribution, expressed in testis and in epithelial cells of trachea and bronchial tube.

Its subcellular location is the cytoplasm. Its function is as follows. Cytoplasmic protein that plays a role in the proper assembly of dynein arm complexes in motile cilia in both respiratory cells and sperm flagella. The polypeptide is Tetratricopeptide repeat protein 12 (TTC12) (Homo sapiens (Human)).